Here is a 296-residue protein sequence, read N- to C-terminus: Non-homologous end joining protein Ku (296 aa).

In terms of domain architecture, Ku spans 11–187 (TFGLVNIPVK…ELPEAGEPSS (177 aa)). Positions 254–296 (AAARRRGDEHEAPARGERRHAAAAAARTTGRPRAARASRKKRG) are disordered. The span at 258-273 (RRGDEHEAPARGERRH) shows a compositional bias: basic and acidic residues. The segment covering 275–285 (AAAAARTTGRP) has biased composition (low complexity). The segment covering 286-296 (RAARASRKKRG) has biased composition (basic residues).

It belongs to the prokaryotic Ku family. Homodimer. Interacts with LigD.

In terms of biological role, with LigD forms a non-homologous end joining (NHEJ) DNA repair enzyme, which repairs dsDNA breaks with reduced fidelity. Binds linear dsDNA with 5'- and 3'- overhangs but not closed circular dsDNA nor ssDNA. Recruits and stimulates the ligase activity of LigD. This Anaeromyxobacter sp. (strain K) protein is Non-homologous end joining protein Ku.